The following is a 512-amino-acid chain: MNLQLDYFSITSFLVFLVVLFRIVSDWKKKSTNLRLPPGPSKLPIIGSVHHLIGMDVDLPYHAFADLAKKYGPLMHLQLGQMSLVVASSAKMFKELMKENDLAISQRPVPYVARVLNDAGRDIAFVPYGDYWRQIRKISRMELFSVRKVQSLYYIREDQSNKMIDAIRGSSETVMNLSKAVSDYTSTVVARAAFGSGCKDQDKFIKLSLEMVAAAGAVSTLPDMFPALGFIPILSGKKAFLQNIQKEADKILDYIIDEHIQRTKSKDYDGKESDKEDIVDVLLRLEKTGELEIPITTQDIKAVIWSVFAGGTDTSSTTTLWAMSELMRNPKVMEKVQAEVREKLKGKKEILEADIQDLPYMRAVIKETLRLRIPGPLLLPRETMEPIEVDGYVIPEKTKILFNAWAVTRDPELWENPESFIPERFIEKQIDFKGTNYEFTPFGSGRRICPGMNFGIANVELPLAKLLYYFNWQLPHGMKPEDLDMTAKFGVVCGRKNDLFLIPTPYNIEGQN.

A helical membrane pass occupies residues 1–21; it reads MNLQLDYFSITSFLVFLVVLF. Cysteine 449 serves as a coordination point for heme.

Belongs to the cytochrome P450 family. The cofactor is heme.

It is found in the membrane. The catalysed reaction is tirucalla-7,24-dien-3beta-ol + 2 reduced [NADPH--hemoprotein reductase] + 2 O2 = dihydroniloticin + 2 oxidized [NADPH--hemoprotein reductase] + 2 H2O + 2 H(+). The protein operates within secondary metabolite biosynthesis; terpenoid biosynthesis. Functionally, monooxygenase involved in the biosynthesis of limonoids triterpene natural products such as azadirachtin, an antifeedant widely used as bioinsecticide, and possessing many medicinal applications including anti-tumoral, anti-malarial, anti-rheumatic, antibacterial, anti-inflammatory, anti-pyretic and diuretic effects. Catalyzes the conversion of tirucalladienol to dihydroniloticin. The sequence is that of Dihydroniloticin synthase CYP71CD2 from Azadirachta indica (Neem tree).